We begin with the raw amino-acid sequence, 471 residues long: Plant intracellular Ras-group-related LRR protein 2 (471 aa).

Residues 106–133 are a coiled coil; the sequence is VVRLDEVHDSYEKKLKDTEEELSRVYST. LRR repeat units lie at residues 159-182, 183-205, 206-229, 231-251, 253-275, 276-298, 300-321, 324-346, 347-369, and 371-392; these read GGTVERIDLSSQELKLIPEAFWKV, VGLVYLNLSGNDLTFIPDAISKL, KKLEELDVSSNSLESLPDSIGMLL, LRILNVNANNLTALPESIAHC, SLVELDASYNNLTSLPTNIGYGL, QNLERLSIQLNKLRYFPGSISEM, NLKYLDAHMNEIHGIPNSIGRL, LEVLNLSSNFNNLMGVPDTITDL, TNLRELDLSNNQIQAIPDSFYRL, and KLEKLNLDQNPLEIPSQEVATQ. A GVYW; degenerate motif is present at residues 393-405; the sequence is GAEVVREFMRKRW.

It belongs to the SHOC2 family. Widely expressed but preferentially in roots.

Leucine-rich repeat protein that likely mediates protein interactions, possibly in the context of signal transduction. This chain is Plant intracellular Ras-group-related LRR protein 2 (PIRL2), found in Arabidopsis thaliana (Mouse-ear cress).